Consider the following 354-residue polypeptide: Guanine nucleotide-binding protein G(o) subunit alpha (354 aa).

Gly-2 carries N-myristoyl glycine lipidation. Cys-3 is lipidated: S-palmitoyl cysteine. A G-alpha domain is found at 32-354 (KDIKLLLLGA…ANNLRGCGLY (323 aa)). The interval 35-48 (KLLLLGAGESGKST) is G1 motif. GTP is bound by residues 40–47 (GAGESGKS), 176–182 (LRTRVKT), 201–205 (DVGGQ), 270–273 (NKKD), and Ala-326. Mg(2+) contacts are provided by Ser-47 and Thr-182. The interval 174–182 (DILRTRVKT) is G2 motif. Residues 197–206 (FKLFDVGGQR) form a G3 motif region. Residues 266 to 273 (ILFLNKKD) form a G4 motif region. The G5 motif stretch occupies residues 324–329 (TCATDT).

The protein belongs to the G-alpha family. G(i/o/t/z) subfamily. In terms of assembly, g proteins are composed of 3 units; alpha, beta and gamma. The alpha chain contains the guanine nucleotide binding site. Interacts (in GDP-bound form) with gpr-1; gpr-1 forms a complex with gpr-2 and lin-5. Interacts (in GDP-bound form) with gpb-1. Interacts (in GDP-bound form) with gbas-1 (via GBA motif); the interaction leads to activation of goa-1. Expressed in the ASER neuron and the intestine.

Functionally, guanine nucleotide-binding proteins (G proteins) are involved as modulators or transducers in various transmembrane signaling systems. In the 1-cell embryo, probably together with gpa-16, controls nuclear rotation and spindle elongation during mitosis. During the first embryonic cell divisions, plays a role in gpr-1/2 cortical localization and in the proper orientation of EMS blastomere mitotic spindle. Polarity determinants (par genes) may regulate lin-5/gpr-1/gpr-2/goa-1 locally to create the asymmetric forces that drive spindle movement. Involved in chemosensory responses to attractive and repellent odors detected by AWC and AWB sensory neurons, respectively. In ASER neurons, acts downstream of glr-3 to regulate cold avoidance behavior via calcium signaling, and it may also play a role in sensing cold in the intestine. Negatively regulates axon regeneration after injury downstream of the inhibitory compound arachidonoyl ethanolamide (AEA) by antagonizing the activation of the JNK pathway (mlk-1/mek-1/kgb-1). In neurons, may negatively regulate diacylglycerol (DAG) production mediated by egl-30 signaling cascade and thereby negatively regulates acetylcholine release. Couples to the muscarinic acetylcholine receptor gar-2 to negatively regulate cholinergic receptor activity in the presence of high levels of acetylcholine in ventral cord motor neurons. Plays a role in the navigational capacity of sperm and the targeting of sperm derived from males to the fertilization site in the uterus of hermaphrodites. Involved in egg-laying and in regulating dopamine-mediated locomotion. Most likely couples to the dopamine receptors dop-2 and dop-3 to positively regulate the dopamine-mediated suppression of crh-1/CREB1 transcription factor activation in cholinergic SIA neurons in the presence of food. The sequence is that of Guanine nucleotide-binding protein G(o) subunit alpha from Caenorhabditis elegans.